A 61-amino-acid polypeptide reads, in one-letter code: Alpha-conotoxin-like Tx1.2 (61 aa).

The signal sequence occupies residues 1-20 (MFTVFLLVVLATTVVSFTSG). Positions 21–42 (RSTFRGRNAAAKASGLVSLTDR) are excised as a propeptide. 4-hydroxyproline occurs at positions 44 and 50. 2 cysteine pairs are disulfide-bonded: cysteine 46/cysteine 52 and cysteine 47/cysteine 60. The interval 48 to 50 (SHP) is ser-Xaa-Pro motif, crucial for potent interaction with nAChR.

This sequence belongs to the conotoxin A superfamily. Expressed by the venom duct.

The protein localises to the secreted. In terms of biological role, alpha-conotoxins act on postsynaptic membranes, they bind to the nicotinic acetylcholine receptors (nAChR) and thus inhibit them. This toxin also inhibits high voltage-activated (HVA) calcium channel currents in rat DRG neurons (8% inhibition at 1 uM toxin) probably by activating GABA(B) receptors (GABBR1 and/or GABBR2). In Conus textile (Cloth-of-gold cone), this protein is Alpha-conotoxin-like Tx1.2.